The primary structure comprises 402 residues: 4-hydroxy-3-methylbut-2-enyl diphosphate reductase (402 aa).

Residue cysteine 66 coordinates [4Fe-4S] cluster. Histidine 96 contacts (2E)-4-hydroxy-3-methylbut-2-enyl diphosphate. Residue histidine 96 coordinates dimethylallyl diphosphate. Histidine 96 is an isopentenyl diphosphate binding site. [4Fe-4S] cluster is bound at residue cysteine 157. Histidine 185 serves as a coordination point for (2E)-4-hydroxy-3-methylbut-2-enyl diphosphate. Histidine 185 is a dimethylallyl diphosphate binding site. Residue histidine 185 coordinates isopentenyl diphosphate. Glutamate 187 (proton donor) is an active-site residue. Threonine 250 contacts (2E)-4-hydroxy-3-methylbut-2-enyl diphosphate. A [4Fe-4S] cluster-binding site is contributed by cysteine 288. 4 residues coordinate (2E)-4-hydroxy-3-methylbut-2-enyl diphosphate: serine 317, serine 318, asparagine 319, and serine 379. Residues serine 317, serine 318, asparagine 319, and serine 379 each contribute to the dimethylallyl diphosphate site. Isopentenyl diphosphate contacts are provided by serine 317, serine 318, asparagine 319, and serine 379.

It belongs to the IspH family. Requires [4Fe-4S] cluster as cofactor.

The enzyme catalyses isopentenyl diphosphate + 2 oxidized [2Fe-2S]-[ferredoxin] + H2O = (2E)-4-hydroxy-3-methylbut-2-enyl diphosphate + 2 reduced [2Fe-2S]-[ferredoxin] + 2 H(+). The catalysed reaction is dimethylallyl diphosphate + 2 oxidized [2Fe-2S]-[ferredoxin] + H2O = (2E)-4-hydroxy-3-methylbut-2-enyl diphosphate + 2 reduced [2Fe-2S]-[ferredoxin] + 2 H(+). It functions in the pathway isoprenoid biosynthesis; dimethylallyl diphosphate biosynthesis; dimethylallyl diphosphate from (2E)-4-hydroxy-3-methylbutenyl diphosphate: step 1/1. Its pathway is isoprenoid biosynthesis; isopentenyl diphosphate biosynthesis via DXP pathway; isopentenyl diphosphate from 1-deoxy-D-xylulose 5-phosphate: step 6/6. In terms of biological role, catalyzes the conversion of 1-hydroxy-2-methyl-2-(E)-butenyl 4-diphosphate (HMBPP) into a mixture of isopentenyl diphosphate (IPP) and dimethylallyl diphosphate (DMAPP). Acts in the terminal step of the DOXP/MEP pathway for isoprenoid precursor biosynthesis. This Crocosphaera subtropica (strain ATCC 51142 / BH68) (Cyanothece sp. (strain ATCC 51142)) protein is 4-hydroxy-3-methylbut-2-enyl diphosphate reductase.